The sequence spans 702 residues: Protein crooked neck (702 aa).

HAT repeat units follow at residues 56-88 (DYQQRKRKTFEDNLRKNRMVVSHWIKYAQWEEQ), 90-122 (QEIQRARSIWERALDNEHRNVTLWLKYAEMEMK), 124-156 (KQVNHARNLWDRAVTIMPRVNQFWYKYTYMEEM), 158-189 (ENVAGARQVFERWMEWQPEEQAWQTYVNFELR), 191-222 (KEIDRAREIYERFVYVHPDVKNWIKFARFEES), 224-259 (GFIHGSRRVFERAVEFFGDDYIEERLFIAFARFEEG), 261-295 (KEHDRARIIYKYALDHLPKDRTQELFKAYTKHEKK), 305-337 (VIVSKRKYQYEQEVAANPTNYDAWFDYLRLIEA), 339-373 (GDRDQIRETYERAISNVPPANEKNFWRRYIYLWIN), 383-419 (EDAERTRQIYKTCLELIPHKQFTFSKLWLLYAQFEIR), 454-486 (REFERCRMLYEKFLEFGPENCVTWMKFAELENL), 488-522 (GDTDRARAIFELAVQQPRLDMPELLWKAYIDFEVA), and 524-555 (GETELARQLYERLLERTQHVKVWMSFAKFEMG). A Nuclear localization signal motif is present at residues 620–628 (PRRIKKRQK). Positions 670-702 (KDNTVDDPPATAIASEPEPAADAAPADTTDSGD) are disordered. Low complexity predominate over residues 683 to 702 (ASEPEPAADAAPADTTDSGD).

The protein belongs to the crooked-neck family. As to quaternary structure, colocalizes with a complex containing snRNP proteins. In terms of tissue distribution, transcribed in all cells during embryonic development.

The protein localises to the nucleus speckle. May be involved in pre-mRNA splicing process. Involved in embryonic neurogenesis and cell rearrangement during Malpighian tubule morphogenesis. The chain is Protein crooked neck (crn) from Drosophila melanogaster (Fruit fly).